The chain runs to 272 residues: Shikimate dehydrogenase (NADP(+)) (272 aa).

Residues 19–21 (SLS) and Thr66 each bind shikimate. The active-site Proton acceptor is the Lys70. Position 82 (Glu82) interacts with NADP(+). Shikimate contacts are provided by Asn91 and Asp106. NADP(+) contacts are provided by residues 129 to 133 (GAGGA), 151 to 156 (NRTPEK), and Ile214. Residue Tyr216 coordinates shikimate. NADP(+) is bound at residue Gly237.

This sequence belongs to the shikimate dehydrogenase family. Homodimer.

It catalyses the reaction shikimate + NADP(+) = 3-dehydroshikimate + NADPH + H(+). It participates in metabolic intermediate biosynthesis; chorismate biosynthesis; chorismate from D-erythrose 4-phosphate and phosphoenolpyruvate: step 4/7. Its function is as follows. Involved in the biosynthesis of the chorismate, which leads to the biosynthesis of aromatic amino acids. Catalyzes the reversible NADPH linked reduction of 3-dehydroshikimate (DHSA) to yield shikimate (SA). This is Shikimate dehydrogenase (NADP(+)) from Thermococcus kodakarensis (strain ATCC BAA-918 / JCM 12380 / KOD1) (Pyrococcus kodakaraensis (strain KOD1)).